The sequence spans 87 residues: MANSAQARKRARTALKQRAHNASLRTAFRTAVKKVLKAIEAGDKAAARVVFQASEKVIDRIADKGVFHKNKAARHKSRLSAQIKAMA.

The segment at Met1 to His20 is disordered. The segment covering Ala7–Ala19 has biased composition (basic residues).

Belongs to the bacterial ribosomal protein bS20 family.

Binds directly to 16S ribosomal RNA. The chain is Small ribosomal subunit protein bS20 from Chromobacterium violaceum (strain ATCC 12472 / DSM 30191 / JCM 1249 / CCUG 213 / NBRC 12614 / NCIMB 9131 / NCTC 9757 / MK).